Reading from the N-terminus, the 625-residue chain is Probable potassium transport system protein Kup 2 (625 aa).

The next 12 helical transmembrane spans lie at 15 to 35, 52 to 72, 98 to 118, 134 to 154, 164 to 184, 212 to 232, 246 to 266, 284 to 304, 336 to 356, 365 to 385, 394 to 414, and 417 to 437; these read LSFA…LYAF, ILSL…LVIV, GGWL…DGML, LSPN…FFLF, IGVY…ILGF, FALF…ALFA, WFAV…AFVL, FLPV…QAII, VYLP…VVIF, AYGI…GIIA, FKIL…AGNI, and LLTG…VMYT.

The protein belongs to the HAK/KUP transporter (TC 2.A.72) family.

The protein resides in the cell inner membrane. It catalyses the reaction K(+)(in) + H(+)(in) = K(+)(out) + H(+)(out). Functionally, transport of potassium into the cell. Likely operates as a K(+):H(+) symporter. This chain is Probable potassium transport system protein Kup 2, found in Legionella pneumophila (strain Paris).